The chain runs to 471 residues: Methylenetetrahydrofolate--tRNA-(uracil-5-)-methyltransferase TrmFO (471 aa).

FAD is bound at residue 13-18 (GGGLAG).

The protein belongs to the MnmG family. TrmFO subfamily. The cofactor is FAD.

It is found in the cytoplasm. It carries out the reaction uridine(54) in tRNA + (6R)-5,10-methylene-5,6,7,8-tetrahydrofolate + NADH + H(+) = 5-methyluridine(54) in tRNA + (6S)-5,6,7,8-tetrahydrofolate + NAD(+). It catalyses the reaction uridine(54) in tRNA + (6R)-5,10-methylene-5,6,7,8-tetrahydrofolate + NADPH + H(+) = 5-methyluridine(54) in tRNA + (6S)-5,6,7,8-tetrahydrofolate + NADP(+). Its function is as follows. Catalyzes the folate-dependent formation of 5-methyl-uridine at position 54 (M-5-U54) in all tRNAs. This chain is Methylenetetrahydrofolate--tRNA-(uracil-5-)-methyltransferase TrmFO, found in Azorhizobium caulinodans (strain ATCC 43989 / DSM 5975 / JCM 20966 / LMG 6465 / NBRC 14845 / NCIMB 13405 / ORS 571).